The following is a 132-amino-acid chain: Transmembrane protein 170B (132 aa).

The Extracellular portion of the chain corresponds to 1-37 (MRAEGADHSMINLSVQQVLSLWAHGTVLRNLTEMWYW). Asparagine 12 carries an N-linked (GlcNAc...) asparagine glycan. The helical transmembrane segment at 38 to 58 (IFLWALFSSLFVHGAAGVLMF) threads the bilayer. Residues 59–68 (VMLQRHRQGR) lie on the Cytoplasmic side of the membrane. A helical membrane pass occupies residues 69–89 (VISIIAVSIGFLASVTGAMIT). At 90 to 104 (SAAVAGIYRVAGKNM) the chain is on the extracellular side. Residues 105 to 125 (APLEALVWGVGQTVLTLIISF) traverse the membrane as a helical segment. At 126 to 132 (SRILATL) the chain is on the cytoplasmic side.

The protein belongs to the TMEM170 family. In terms of assembly, interacts with CTNNB1.

It localises to the cell membrane. This chain is Transmembrane protein 170B, found in Mus musculus (Mouse).